A 208-amino-acid chain; its full sequence is Protein-L-isoaspartate O-methyltransferase (208 aa).

Residue Ser59 is part of the active site.

Belongs to the methyltransferase superfamily. L-isoaspartyl/D-aspartyl protein methyltransferase family.

Its subcellular location is the cytoplasm. It carries out the reaction [protein]-L-isoaspartate + S-adenosyl-L-methionine = [protein]-L-isoaspartate alpha-methyl ester + S-adenosyl-L-homocysteine. Functionally, catalyzes the methyl esterification of L-isoaspartyl residues in peptides and proteins that result from spontaneous decomposition of normal L-aspartyl and L-asparaginyl residues. It plays a role in the repair and/or degradation of damaged proteins. This is Protein-L-isoaspartate O-methyltransferase from Klebsiella pneumoniae (strain 342).